Reading from the N-terminus, the 499-residue chain is ALBINO3-like protein 1, chloroplastic (499 aa).

A chloroplast-targeting transit peptide spans 1–45 (MSSTISLKPTHLILSSFSTGKVLQFRRSRFSHTPSSSSSRYRTLV). 4 helical membrane-spanning segments follow: residues 115–135 (LSTVHVPYSYGFAIILLTVLV), 184–204 (LAGINPLAGCLPTLATIPVWI), 263–283 (LAYLVLPLLLVFSQYLSIQIM), and 302–322 (LLPLMIGYFALSVPSGLSLYW). Residues 378–499 (LKIPREKGGE…QQHSHETEKR (122 aa)) form a disordered region. Basic and acidic residues-rich tracts occupy residues 379–420 (KIPR…RQKA), 430–452 (DKAHEQDEKSDTAIVAEDDKKTE), and 486–499 (HDTEQQHSHETEKR). The stretch at 397–436 (GERFRLLKEQEAKRRREKEERQKAEAALSNQNTDKAHEQD) forms a coiled coil.

Belongs to the OXA1/ALB3/YidC (TC 2.A.9.2) family. In terms of assembly, homodimer. Interacts with ALB3. Interacts with STIC2. As to expression, highly expressed in green tissues.

The protein resides in the plastid. It is found in the chloroplast thylakoid membrane. Required for the insertion of some light harvesting chlorophyll-binding proteins (LHCP) into the chloroplast thylakoid membrane. Plays a role in the accumulation of some cytochrome b6f components in the thylakoid membrane. Required for the assembly and/or stability of the F(1)F(0) ATP synthase in chloroplast thylakoid membranes. Functions to stabilize or promote assembly of F(1) during its attachment to the membrane-embedded F(0) part. Participates with STIC2 in thylakoid protein targeting. May function with a specific subset of thylakoidal proteins. This Arabidopsis thaliana (Mouse-ear cress) protein is ALBINO3-like protein 1, chloroplastic.